The chain runs to 165 residues: 3-hydroxyacyl-[acyl-carrier-protein] dehydratase FabZ (165 aa).

Residue His-64 is part of the active site.

This sequence belongs to the thioester dehydratase family. FabZ subfamily.

The protein resides in the cytoplasm. It catalyses the reaction a (3R)-hydroxyacyl-[ACP] = a (2E)-enoyl-[ACP] + H2O. Involved in unsaturated fatty acids biosynthesis. Catalyzes the dehydration of short chain beta-hydroxyacyl-ACPs and long chain saturated and unsaturated beta-hydroxyacyl-ACPs. This is 3-hydroxyacyl-[acyl-carrier-protein] dehydratase FabZ from Acidiphilium cryptum (strain JF-5).